A 371-amino-acid polypeptide reads, in one-letter code: Poly(rC)-binding protein 3 (371 aa).

KH domains follow at residues 45–95 (TLTI…TITG), 129–182 (PVTL…TISG), and 293–357 (ASTH…QYLI).

In terms of tissue distribution, widely expressed, with highest levels in testis and fat tissues and lowest in heart.

The protein resides in the cytoplasm. Functionally, single-stranded nucleic acid binding protein that binds preferentially to oligo dC. The polypeptide is Poly(rC)-binding protein 3 (Pcbp3) (Mus musculus (Mouse)).